A 103-amino-acid polypeptide reads, in one-letter code: Small ribosomal subunit protein uS14c (103 aa).

Positions 26–56 (SSKKKIRSKVSPLSLSEKTKMQEKLQSLPRN) are disordered.

The protein belongs to the universal ribosomal protein uS14 family. As to quaternary structure, part of the 30S ribosomal subunit.

It is found in the plastid. The protein localises to the chloroplast. Its function is as follows. Binds 16S rRNA, required for the assembly of 30S particles. In Saccharum officinarum (Sugarcane), this protein is Small ribosomal subunit protein uS14c.